The primary structure comprises 350 residues: MVVDDSAVVRQVVSSVLKSDSEIEVCGAVADPLFAMTRMRMQWPDVIVLDIEMPRMDGISFLKKIMAERPTPVVICSTLTEKGADTTMQAISAGAVEIITKPKVGLKGFLHDSAKVLINAVKAASRANLKPLQRAMASNLKVTPKLSADAVLAEGNTSRLKTTEQLVAIGTSTGGTQALELVLKALPRVSPGIVIVQHMPEKFTAAFAERLDSLCEISVKEAKHKMRVLPGQALIAPGGKHMLLKRSGAQYYVEVIDGPLVSRHRPSVDVLFRSVAQSASGNALGIIMTGMGDDGVKGMLEMRRAGAVTLAQDEASCVVYGMPKEAVKCGAVERSLSLSEIPQAILDCSH.

The region spanning 1–116 (MVVDDSAVVR…KGFLHDSAKV (116 aa)) is the Response regulatory domain. Position 50 is a 4-aspartylphosphate (aspartate 50). A CheB-type methylesterase domain is found at 160–350 (LKTTEQLVAI…IPQAILDCSH (191 aa)). Residues serine 172, histidine 198, and aspartate 294 contribute to the active site.

It belongs to the CheB family. Phosphorylated by CheA. Phosphorylation of the N-terminal regulatory domain activates the methylesterase activity.

Its subcellular location is the cytoplasm. It carries out the reaction [protein]-L-glutamate 5-O-methyl ester + H2O = L-glutamyl-[protein] + methanol + H(+). It catalyses the reaction L-glutaminyl-[protein] + H2O = L-glutamyl-[protein] + NH4(+). In terms of biological role, involved in chemotaxis. Part of a chemotaxis signal transduction system that modulates chemotaxis in response to various stimuli. Catalyzes the demethylation of specific methylglutamate residues introduced into the chemoreceptors (methyl-accepting chemotaxis proteins or MCP) by CheR. Also mediates the irreversible deamidation of specific glutamine residues to glutamic acid. In Photobacterium profundum (strain SS9), this protein is Protein-glutamate methylesterase/protein-glutamine glutaminase 1.